The chain runs to 334 residues: Glycerol-3-phosphate dehydrogenase [NAD(P)+] (334 aa).

Residues serine 10, tryptophan 11, histidine 31, arginine 32, and lysine 105 each contribute to the NADPH site. The sn-glycerol 3-phosphate site is built by lysine 105, glycine 136, and serine 138. Residue alanine 140 coordinates NADPH. Sn-glycerol 3-phosphate-binding residues include lysine 191, aspartate 244, serine 254, arginine 255, and asparagine 256. Lysine 191 functions as the Proton acceptor in the catalytic mechanism. Arginine 255 contacts NADPH. NADPH contacts are provided by valine 279 and glutamate 281.

This sequence belongs to the NAD-dependent glycerol-3-phosphate dehydrogenase family.

The protein resides in the cytoplasm. The enzyme catalyses sn-glycerol 3-phosphate + NAD(+) = dihydroxyacetone phosphate + NADH + H(+). It carries out the reaction sn-glycerol 3-phosphate + NADP(+) = dihydroxyacetone phosphate + NADPH + H(+). Its pathway is membrane lipid metabolism; glycerophospholipid metabolism. Catalyzes the reduction of the glycolytic intermediate dihydroxyacetone phosphate (DHAP) to sn-glycerol 3-phosphate (G3P), the key precursor for phospholipid synthesis. The polypeptide is Glycerol-3-phosphate dehydrogenase [NAD(P)+] (Chlorobium phaeobacteroides (strain BS1)).